The following is a 152-amino-acid chain: Nucleoside diphosphate kinase (152 aa).

Positions 11, 59, 87, 93, 104, and 114 each coordinate ATP. The active-site Pros-phosphohistidine intermediate is H117.

It belongs to the NDK family. In terms of assembly, homotetramer. Requires Mg(2+) as cofactor.

It localises to the cytoplasm. The catalysed reaction is dZDP + ATP = dZTP + ADP. It carries out the reaction a 2'-deoxyribonucleoside 5'-diphosphate + ATP = a 2'-deoxyribonucleoside 5'-triphosphate + ADP. It catalyses the reaction a ribonucleoside 5'-diphosphate + ATP = a ribonucleoside 5'-triphosphate + ADP. The protein operates within purine metabolism. In terms of biological role, major role in the synthesis of nucleoside triphosphates other than ATP. The ATP gamma phosphate is transferred to the NDP beta phosphate via a ping-pong mechanism, using a phosphorylated active-site intermediate. (Microbial infection) Catalyzes the phosphorylation of dZDP to dZTP, when the bacterium is infected by a phage that produces the substrate for the synthesis of dZTP (2- amino-2'-deoxyadenosine 5'-triphosphate), which is then used by the phage as a DNA polymerase substrate. This is Nucleoside diphosphate kinase from Synechococcus sp. (strain WH7803).